The following is a 299-amino-acid chain: ATP phosphoribosyltransferase (299 aa).

This sequence belongs to the ATP phosphoribosyltransferase family. Long subfamily. In terms of assembly, equilibrium between an active dimeric form, an inactive hexameric form and higher aggregates. Interconversion between the various forms is largely reversible and is influenced by the natural substrates and inhibitors of the enzyme. Mg(2+) serves as cofactor.

It localises to the cytoplasm. It carries out the reaction 1-(5-phospho-beta-D-ribosyl)-ATP + diphosphate = 5-phospho-alpha-D-ribose 1-diphosphate + ATP. The protein operates within amino-acid biosynthesis; L-histidine biosynthesis; L-histidine from 5-phospho-alpha-D-ribose 1-diphosphate: step 1/9. Its activity is regulated as follows. Feedback inhibited by histidine. Catalyzes the condensation of ATP and 5-phosphoribose 1-diphosphate to form N'-(5'-phosphoribosyl)-ATP (PR-ATP). Has a crucial role in the pathway because the rate of histidine biosynthesis seems to be controlled primarily by regulation of HisG enzymatic activity. The protein is ATP phosphoribosyltransferase of Blochmanniella pennsylvanica (strain BPEN).